A 466-amino-acid chain; its full sequence is Asparagine--tRNA ligase (466 aa).

This sequence belongs to the class-II aminoacyl-tRNA synthetase family. In terms of assembly, homodimer.

The protein resides in the cytoplasm. It carries out the reaction tRNA(Asn) + L-asparagine + ATP = L-asparaginyl-tRNA(Asn) + AMP + diphosphate + H(+). The chain is Asparagine--tRNA ligase from Yersinia pseudotuberculosis serotype O:1b (strain IP 31758).